Consider the following 72-residue polypeptide: DNA-directed RNA polymerase subunit omega (72 aa).

Belongs to the RNA polymerase subunit omega family. In terms of assembly, the RNAP catalytic core consists of 2 alpha, 1 beta, 1 beta' and 1 omega subunit. When a sigma factor is associated with the core the holoenzyme is formed, which can initiate transcription.

It catalyses the reaction RNA(n) + a ribonucleoside 5'-triphosphate = RNA(n+1) + diphosphate. Its function is as follows. Promotes RNA polymerase assembly. Latches the N- and C-terminal regions of the beta' subunit thereby facilitating its interaction with the beta and alpha subunits. The chain is DNA-directed RNA polymerase subunit omega from Petrotoga mobilis (strain DSM 10674 / SJ95).